Reading from the N-terminus, the 775-residue chain is Glutamine--tRNA ligase (775 aa).

An N-acetylalanine modification is found at Ala2. Ser70 is modified (phosphoserine). ATP-binding positions include 271–273 (EPN) and 277–283 (HIGHAKA). Residue Asp303 participates in L-glutamine binding. An N6-acetyllysine modification is found at Lys309. Tyr438 lines the L-glutamine pocket. Residues Thr457, 486–487 (RL), and 494–496 (VSK) each bind ATP. Phosphoserine is present on Ser495.

This sequence belongs to the class-I aminoacyl-tRNA synthetase family. Monomer. Part of a multisubunit complex that groups tRNA ligases for Arg (RARS1), Asp (DARS1), Gln (QARS1), Ile (IARS1), Leu (LARS1), Lys (KARS1), Met (MARS1) the bifunctional ligase for Glu and Pro (EPRS1) and the auxiliary subunits AIMP1/p43, AIMP2/p38 and EEF1E1/p18. Interacts with RARS1. Part of a complex composed of RARS1, QARS1 and AIMP1. In terms of tissue distribution, detected in dorsal root ganglia (at protein level). Detected in dorsal root ganglia.

The protein localises to the cytoplasm. It is found in the cytosol. It carries out the reaction tRNA(Gln) + L-glutamine + ATP = L-glutaminyl-tRNA(Gln) + AMP + diphosphate. In terms of biological role, glutamine--tRNA ligase. Plays a critical role in brain development. In Rattus norvegicus (Rat), this protein is Glutamine--tRNA ligase (Qars1).